An 834-amino-acid chain; its full sequence is MSGWRKIYYKLLNLPLKLLVKSKVIPADPVSELGLDPSRPILYVLPYNSKADLLTLRAQCLAQDLPDPLIPLEIDGVQLPSHVFIENGPRVFRYYVPKQESVKLFHDYLDLHRNNPALDIQMLPVSVMFGRSPGREGHGTPHLRVLNGVQKFFAVLWLGRDSFVRFSTTVSLRRMASEHGTDKTIAHKLARVARMHFSRQRLAAVGPSLPARQDLFKKLLASKAIEKAVADEARSKKISHEKAQQNAITLMEEIAANFSYEAVRLSDRVLSWTWNRLYQGINVHNAERVRQLAQDGHEIVYVPCHRSHMDYLLLSYVLYHQGLVPPHIAAGINLNFWPAGPIFRRLGAFFIRRTFKGNKLYSTVFREYLGELFTRGYSVEYFVEGGRSRTGRLLEPKTGTLSMTIQAMLRGGTRPITLVPIYIGYEHVMEVGTYAKELRGAIKEKENLLQMLRGLRKLRNLGQGYVNFGEPLPLTTYLNTHVPQWRDAIDPIEAQRPSWLTPAVNDLANQIMVRINNAAAANAMNLCSTALLASRQRSLTREQLLEQLDCYLQLMRNAPYAKDTTVPDKTPEELLNHALNMNKFEVEKDTIGDIIILPREQAVLMTYYRNNIQHLLILPSLIASMVMYHRRITRTELLHKISMIYPMLKAELFLHYSKEQLPETLDTLIDELARQQLICDKGSELVLNPARIRPLQLLAAGVRETLQRYAITLSLLSATPSINRGALEKESRIMAQRLSVLHGINAPEFFDKAVFSTLVATLREEGYISDSGDAIQEHTLEVYNMLSALMTPEVKLTIESVSMPAETSNQPEAPETPETPETPETPEPEGKTES.

The short motif at 304-309 is the HXXXXD motif element; it reads CHRSHM. The interval 800 to 834 is disordered; sequence SVSMPAETSNQPEAPETPETPETPETPEPEGKTES.

The protein belongs to the GPAT/DAPAT family.

The protein resides in the cell inner membrane. It carries out the reaction sn-glycerol 3-phosphate + an acyl-CoA = a 1-acyl-sn-glycero-3-phosphate + CoA. The protein operates within phospholipid metabolism; CDP-diacylglycerol biosynthesis; CDP-diacylglycerol from sn-glycerol 3-phosphate: step 1/3. The protein is Glycerol-3-phosphate acyltransferase of Yersinia pseudotuberculosis serotype I (strain IP32953).